We begin with the raw amino-acid sequence, 420 residues long: Gamma-glutamyl phosphate reductase (420 aa).

It belongs to the gamma-glutamyl phosphate reductase family.

It is found in the cytoplasm. It catalyses the reaction L-glutamate 5-semialdehyde + phosphate + NADP(+) = L-glutamyl 5-phosphate + NADPH + H(+). It functions in the pathway amino-acid biosynthesis; L-proline biosynthesis; L-glutamate 5-semialdehyde from L-glutamate: step 2/2. Catalyzes the NADPH-dependent reduction of L-glutamate 5-phosphate into L-glutamate 5-semialdehyde and phosphate. The product spontaneously undergoes cyclization to form 1-pyrroline-5-carboxylate. The sequence is that of Gamma-glutamyl phosphate reductase from Cereibacter sphaeroides (strain KD131 / KCTC 12085) (Rhodobacter sphaeroides).